A 271-amino-acid polypeptide reads, in one-letter code: MLTVDNLEKTYDSGDRALKGVSFEVSGNEIVAIIGPSGAGKSTLVRSINRLTEPTGGRISLDDTEVTGLEKSALRDVRRDMGMIFQEFNLVERLTVMENILSGRLGYLSTWNAFRRNFPPEDIRRAREILSRVNLEGVENNRADELSGGQRQRVGIARAVIQRPKILLADEPTSALDPDTSREVMSLLTDIAHEDDIPIIINIHEVDLAVDYADRIIGLSDGEIVFNGPPDDLDQAARDEIYRGGESIADREEPSAGNSTDADDVIAERGD.

An ABC transporter domain is found at 2–246 (LTVDNLEKTY…ARDEIYRGGE (245 aa)). 35 to 42 (GPSGAGKS) contacts ATP. Over residues 243–254 (RGGESIADREEP) the composition is skewed to basic and acidic residues. Residues 243–271 (RGGESIADREEPSAGNSTDADDVIAERGD) are disordered.

The protein belongs to the ABC transporter superfamily. Phosphonates importer (TC 3.A.1.9.1) family. As to quaternary structure, the complex is composed of two ATP-binding proteins (PhnC), two transmembrane proteins (PhnE) and a solute-binding protein (PhnD).

The protein resides in the cell membrane. It catalyses the reaction phosphonate(out) + ATP + H2O = phosphonate(in) + ADP + phosphate + H(+). Its function is as follows. Part of the ABC transporter complex PhnCDE involved in phosphonates import. Responsible for energy coupling to the transport system. This Haloarcula marismortui (strain ATCC 43049 / DSM 3752 / JCM 8966 / VKM B-1809) (Halobacterium marismortui) protein is Phosphonates import ATP-binding protein PhnC 2.